The chain runs to 1011 residues: Probable calcium-transporting ATPase (1011 aa).

Residues 1–65 are Cytoplasmic-facing; that stretch reads MLPENLPTDP…WKLVLAQFED (65 aa). A helical transmembrane segment spans residues 66-84; sequence TLVRILLLAATVSFAMAVV. The Extracellular segment spans residues 85–90; that stretch reads ENNAAD. A helical membrane pass occupies residues 91 to 110; it reads FVEPFIILLILILNATVGVW. The Cytoplasmic portion of the chain corresponds to 111–258; the sequence is QENRAEGAIE…QVKLDEFGVL (148 aa). The helical transmembrane segment at 259 to 278 threads the bilayer; that stretch reads LSKVIGYICLVVFAVNLVRW. The Extracellular segment spans residues 279-303; the sequence is YATHKPTKNETFFTRYIQPSVHCLK. Residues 304–321 form a helical membrane-spanning segment; that stretch reads VAVALAVAAIPEGLPAVV. The Cytoplasmic portion of the chain corresponds to 322-770; it reads TTCLALGTRR…RYLISSNIGE (449 aa). The 4-aspartylphosphate intermediate role is filled by Asp-357. Position 514 (Lys-514) interacts with ATP. A helical membrane pass occupies residues 771–794; the sequence is VVCILVTGLFGLPEALSPVQLLWV. The Extracellular segment spans residues 795-835; it reads NLVTDGLPATALGFNAPDRDIMEQRPRRMEEPIVNGWLFMR. Residues 836-856 traverse the membrane as a helical segment; that stretch reads YMVIGVYVGLATVGGFLWWFL. The Cytoplasmic portion of the chain corresponds to 857–885; sequence RHGFSWHDLTTYTACSDMTNGTCLLLANP. The chain crosses the membrane as a helical span at residues 886-905; it reads QTARAIALSILVVVEMLNAL. Residues 906–922 lie on the Extracellular side of the membrane; the sequence is NALSENASLIVSRPSSN. Residues 923 to 942 form a helical membrane-spanning segment; sequence VWLLFAIFSSLSLHLIIMYV. The Cytoplasmic portion of the chain corresponds to 943 to 1011; sequence PFFAKLFNIV…MEKAQEKKKD (69 aa).

This sequence belongs to the cation transport ATPase (P-type) (TC 3.A.3) family.

Its subcellular location is the flagellar pocket. The protein resides in the cell membrane. It catalyses the reaction Ca(2+)(in) + ATP + H2O = Ca(2+)(out) + ADP + phosphate + H(+). Its function is as follows. This magnesium-dependent enzyme catalyzes the hydrolysis of ATP coupled with the transport of the calcium. This chain is Probable calcium-transporting ATPase (TBA1), found in Trypanosoma brucei brucei.